A 426-amino-acid polypeptide reads, in one-letter code: Dihydroorotase (426 aa).

Residues His-58 and His-60 each coordinate Zn(2+). Substrate-binding positions include 60-62 (HLR) and Asn-92. Residues Asp-150, His-177, and His-230 each coordinate Zn(2+). Asn-276 contacts substrate. Residue Asp-303 participates in Zn(2+) binding. Asp-303 is a catalytic residue. Substrate contacts are provided by residues His-307 and 321 to 322 (FG).

It belongs to the metallo-dependent hydrolases superfamily. DHOase family. Class I DHOase subfamily. Requires Zn(2+) as cofactor.

It carries out the reaction (S)-dihydroorotate + H2O = N-carbamoyl-L-aspartate + H(+). Its pathway is pyrimidine metabolism; UMP biosynthesis via de novo pathway; (S)-dihydroorotate from bicarbonate: step 3/3. Its function is as follows. Catalyzes the reversible cyclization of carbamoyl aspartate to dihydroorotate. This chain is Dihydroorotase, found in Listeria welshimeri serovar 6b (strain ATCC 35897 / DSM 20650 / CCUG 15529 / CIP 8149 / NCTC 11857 / SLCC 5334 / V8).